The sequence spans 512 residues: Threonine synthase (512 aa).

Lys121 is modified (N6-(pyridoxal phosphate)lysine). Residues Gly273, Asn274, Phe275, Asp277, and Thr445 each coordinate pyridoxal 5'-phosphate.

It belongs to the threonine synthase family. Requires pyridoxal 5'-phosphate as cofactor.

The catalysed reaction is O-phospho-L-homoserine + H2O = L-threonine + phosphate. It functions in the pathway amino-acid biosynthesis; L-threonine biosynthesis; L-threonine from L-aspartate: step 5/5. Catalyzes the gamma-elimination of phosphate from L-phosphohomoserine and the beta-addition of water to produce L-threonine. This chain is Threonine synthase (THR4), found in Eremothecium gossypii (strain ATCC 10895 / CBS 109.51 / FGSC 9923 / NRRL Y-1056) (Yeast).